Here is a 557-residue protein sequence, read N- to C-terminus: Dihydroxy-acid dehydratase (557 aa).

Cysteine 50 is a binding site for [2Fe-2S] cluster. Residue aspartate 82 participates in Mg(2+) binding. Residue cysteine 123 coordinates [2Fe-2S] cluster. Residues aspartate 124 and lysine 125 each contribute to the Mg(2+) site. An N6-carboxylysine modification is found at lysine 125. Cysteine 195 provides a ligand contact to [2Fe-2S] cluster. Glutamate 447 provides a ligand contact to Mg(2+). The active-site Proton acceptor is serine 473.

This sequence belongs to the IlvD/Edd family. In terms of assembly, homodimer. [2Fe-2S] cluster serves as cofactor. Requires Mg(2+) as cofactor.

The catalysed reaction is (2R)-2,3-dihydroxy-3-methylbutanoate = 3-methyl-2-oxobutanoate + H2O. The enzyme catalyses (2R,3R)-2,3-dihydroxy-3-methylpentanoate = (S)-3-methyl-2-oxopentanoate + H2O. It functions in the pathway amino-acid biosynthesis; L-isoleucine biosynthesis; L-isoleucine from 2-oxobutanoate: step 3/4. Its pathway is amino-acid biosynthesis; L-valine biosynthesis; L-valine from pyruvate: step 3/4. Functions in the biosynthesis of branched-chain amino acids. Catalyzes the dehydration of (2R,3R)-2,3-dihydroxy-3-methylpentanoate (2,3-dihydroxy-3-methylvalerate) into 2-oxo-3-methylpentanoate (2-oxo-3-methylvalerate) and of (2R)-2,3-dihydroxy-3-methylbutanoate (2,3-dihydroxyisovalerate) into 2-oxo-3-methylbutanoate (2-oxoisovalerate), the penultimate precursor to L-isoleucine and L-valine, respectively. The sequence is that of Dihydroxy-acid dehydratase from Burkholderia mallei (strain NCTC 10247).